A 603-amino-acid chain; its full sequence is Translation initiation factor IF-2 (603 aa).

The 168-residue stretch at threonine 112–aspartate 279 folds into the tr-type G domain. Residues glycine 121–threonine 128 are G1. Residue glycine 121 to threonine 128 participates in GTP binding. The G2 stretch occupies residues glycine 146–histidine 150. The G3 stretch occupies residues aspartate 167–glycine 170. GTP is bound by residues aspartate 167–histidine 171 and asparagine 221–aspartate 224. A G4 region spans residues asparagine 221–aspartate 224. The tract at residues serine 257–leucine 259 is G5.

Belongs to the TRAFAC class translation factor GTPase superfamily. Classic translation factor GTPase family. IF-2 subfamily.

The protein resides in the cytoplasm. Functionally, one of the essential components for the initiation of protein synthesis. Protects formylmethionyl-tRNA from spontaneous hydrolysis and promotes its binding to the 30S ribosomal subunits. Also involved in the hydrolysis of GTP during the formation of the 70S ribosomal complex. The sequence is that of Translation initiation factor IF-2 from Mycoplasmopsis pulmonis (strain UAB CTIP) (Mycoplasma pulmonis).